The sequence spans 284 residues: L-ribulose-5-phosphate 3-epimerase UlaE (284 aa).

The protein belongs to the L-ribulose-5-phosphate 3-epimerase family.

The catalysed reaction is L-ribulose 5-phosphate = L-xylulose 5-phosphate. It functions in the pathway cofactor degradation; L-ascorbate degradation; D-xylulose 5-phosphate from L-ascorbate: step 3/4. Its function is as follows. Catalyzes the isomerization of L-xylulose-5-phosphate to L-ribulose-5-phosphate. Is involved in the anaerobic L-ascorbate utilization. The sequence is that of L-ribulose-5-phosphate 3-epimerase UlaE from Escherichia coli O8 (strain IAI1).